The sequence spans 168 residues: MRLPSILVVAASTLFLHYGYTSASPGADAVLTGAVSLGFLQLVGADQSVIEQPRFLRDGKIAEGDNEERVNAQKEAAAKVLDQVFKTKSLSPLDKLEKTSNLAVIRHVAAMVDDKVDKIFAFADAVGMGRASMLKMLKGDKQFTDAERLKTVKRYVKFLIKKEQNNKA.

A signal peptide spans 1-23 (MRLPSILVVAASTLFLHYGYTSA). Residues 54 to 69 (RFLRDGKIAEGDNEER) carry the RxLR-dEER motif.

This sequence belongs to the RxLR effector family.

The protein resides in the secreted. It localises to the host cell. Functionally, effector that is involved in host plant infection. Contributes to virulence during the early infection stage, by inhibiting plant defense responses induced by both PAMP-triggered immunity (PTI) and effector-triggered immunity (ETI). The sequence is that of RxLR effector protein CRE8 from Phytophthora infestans (strain T30-4) (Potato late blight agent).